A 233-amino-acid polypeptide reads, in one-letter code: MADS-box protein CMB1 (233 aa).

Positions 3-58 (RGRVELKRIENKINRQVTFAKRRNGLLKKAYELSVLCDAEVALIVFSNRGKLYEFC) constitute an MADS-box domain. The K-box domain maps to 87–177 (TESSYQEYLK…KTKLEESCAS (91 aa)).

It is found in the nucleus. The chain is MADS-box protein CMB1 (CMB1) from Dianthus caryophyllus (Carnation).